Consider the following 361-residue polypeptide: DNA replication and repair protein RecF (361 aa).

Position 30 to 37 (30 to 37 (GDNAQGKT)) interacts with ATP.

The protein belongs to the RecF family.

Its subcellular location is the cytoplasm. Its function is as follows. The RecF protein is involved in DNA metabolism; it is required for DNA replication and normal SOS inducibility. RecF binds preferentially to single-stranded, linear DNA. It also seems to bind ATP. The polypeptide is DNA replication and repair protein RecF (Clostridium novyi (strain NT)).